A 419-amino-acid polypeptide reads, in one-letter code: eIF5-mimic protein 1 (419 aa).

The interval 1 to 22 is disordered; it reads MNKHQKPVLTGQRFKTRKRDEK. An N6-acetyllysine modification is found at Lys117. The 168-residue stretch at 248 to 415 folds into the W2 domain; sequence VQQSLGTRKE…QNAEEESESE (168 aa). Residues Ser412, Ser414, and Ser419 each carry the phosphoserine modification.

It belongs to the BZW family. Interacts with EIF3E, EIF2S2 and EIF3C.

The protein resides in the cytoplasm. Its function is as follows. Translation initiation regulator which represses non-AUG initiated translation and repeat-associated non-AUG (RAN) initiated translation by acting as a competitive inhibitor of eukaryotic translation initiation factor 5 (EIF5) function. Increases the accuracy of translation initiation by impeding EIF5-dependent translation from non-AUG codons by competing with it for interaction with EIF2S2 within the 43S pre-initiation complex (PIC) in an EIF3C-binding dependent manner. The chain is eIF5-mimic protein 1 (Bzw2) from Mus musculus (Mouse).